The sequence spans 266 residues: 22 kDa alpha-zein 14 (266 aa).

The signal sequence occupies residues 1–21 (MATKILSLLALLALFASATNA).

Belongs to the zein family.

Its function is as follows. Zeins are major seed storage proteins. In Zea mays (Maize), this protein is 22 kDa alpha-zein 14.